Consider the following 423-residue polypeptide: Histidine--tRNA ligase (423 aa).

This sequence belongs to the class-II aminoacyl-tRNA synthetase family. As to quaternary structure, homodimer.

It localises to the cytoplasm. It carries out the reaction tRNA(His) + L-histidine + ATP = L-histidyl-tRNA(His) + AMP + diphosphate + H(+). This is Histidine--tRNA ligase from Prochlorococcus marinus (strain MIT 9211).